The following is a 1342-amino-acid chain: Receptor tyrosine-protein kinase erbB-3 (1342 aa).

Residues 1-19 form the signal peptide; it reads MRANDALQVLGLLFSLARG. The Extracellular portion of the chain corresponds to 20–643; it reads SEVGNSQAVC…LVLIGKTHLT (624 aa). Cysteine 29 and cysteine 56 are joined by a disulfide. Residue asparagine 126 is glycosylated (N-linked (GlcNAc...) asparagine). Cystine bridges form between cysteine 156–cysteine 183, cysteine 186–cysteine 194, cysteine 190–cysteine 202, cysteine 210–cysteine 218, cysteine 214–cysteine 226, cysteine 227–cysteine 235, cysteine 231–cysteine 243, cysteine 246–cysteine 255, cysteine 259–cysteine 286, cysteine 290–cysteine 301, cysteine 305–cysteine 320, and cysteine 323–cysteine 327. Residue asparagine 250 is glycosylated (N-linked (GlcNAc...) asparagine). N-linked (GlcNAc...) asparagine glycans are attached at residues asparagine 353, asparagine 408, asparagine 414, asparagine 437, and asparagine 469. Intrachain disulfides connect cysteine 500–cysteine 509, cysteine 504–cysteine 517, cysteine 520–cysteine 529, cysteine 533–cysteine 549, cysteine 552–cysteine 565, cysteine 556–cysteine 573, cysteine 576–cysteine 585, cysteine 589–cysteine 610, cysteine 613–cysteine 621, and cysteine 617–cysteine 629. N-linked (GlcNAc...) asparagine glycosylation is present at asparagine 522. N-linked (GlcNAc...) asparagine glycosylation is present at asparagine 566. Asparagine 616 carries an N-linked (GlcNAc...) asparagine glycan. The chain crosses the membrane as a helical span at residues 644–664; it reads MALTVIAGLVVIFMMLGGTFL. Topologically, residues 665 to 1342 are cytoplasmic; the sequence is YWRGRRIQNK…LFPKANAQRT (678 aa). Position 686 is a phosphoserine (serine 686). The Protein kinase domain occupies 709–966; that stretch reads LRKLKVLGSG…TFKELANEFT (258 aa). Residues 715–723, lysine 742, 788–790, and 834–839 contribute to the ATP site; these read LGSGVFGTV, QYL, and NLAARN. Asparagine 834 serves as the catalytic Proton acceptor. 2 disordered regions span residues 980–999 and 1033–1152; these read RESG…TNKK and LPVG…PGLE. Serine 982 carries the phosphoserine modification. Positions 1042 to 1075 are enriched in polar residues; that stretch reads RGSQSLLSPSSGYMPMNQGNLGESCQESAVSGSS.

It belongs to the protein kinase superfamily. Tyr protein kinase family. EGF receptor subfamily. As to quaternary structure, monomer and homodimer. Heterodimer with each of the other ERBB receptors (Potential). Interacts with CSPG5. Interacts with GRB7. Interacts with MUC1. Interacts with MYOC. Interacts with isoform 2 of PA2G4. Found in a ternary complex with NRG1 and ITGAV:ITGB3 or ITGA6:ITGB4. Autophosphorylated. Ligand-binding increases phosphorylation on tyrosine residues and promotes its association with the p85 subunit of phosphatidylinositol 3-kinase. In terms of tissue distribution, epithelial tissues and brain.

It localises to the cell membrane. It is found in the secreted. It catalyses the reaction L-tyrosyl-[protein] + ATP = O-phospho-L-tyrosyl-[protein] + ADP + H(+). In terms of biological role, tyrosine-protein kinase that plays an essential role as cell surface receptor for neuregulins. Binds to neuregulin-1 (NRG1) and is activated by it; ligand-binding increases phosphorylation on tyrosine residues and promotes its association with the p85 subunit of phosphatidylinositol 3-kinase. May also be activated by CSPG5. Involved in the regulation of myeloid cell differentiation. The chain is Receptor tyrosine-protein kinase erbB-3 (ERBB3) from Homo sapiens (Human).